The chain runs to 456 residues: RuvB-like 1 (456 aa).

70 to 77 is a binding site for ATP; sequence GPPGTGKT.

It belongs to the RuvB family. Forms homohexameric rings. Can form a dodecamer with ruvbl2 made of two stacked hexameric rings. Is a component of the RNA polymerase II holoenzyme complex. Component of the chromatin-remodeling Ino80 complex. Component of some MLL1/MLL complex.

It is found in the nucleus. The protein resides in the dynein axonemal particle. The enzyme catalyses ATP + H2O = ADP + phosphate + H(+). Functionally, has single-stranded DNA-stimulated ATPase and ATP-dependent DNA helicase (3' to 5') activity suggesting a role in nuclear processes such as recombination and transcription. Proposed core component of the chromatin remodeling INO80 complex which exhibits DNA- and nucleosome-activated ATPase activity and catalyzes ATP-dependent nucleosome sliding. This Xenopus laevis (African clawed frog) protein is RuvB-like 1 (ruvbl1).